Consider the following 824-residue polypeptide: Lon protease (824 aa).

A disordered region spans residues 1-23 (MNEPMSLFDDLPEEHDEPQEAPE). Residues 10-20 (DLPEEHDEPQE) show a composition bias toward acidic residues. In terms of domain architecture, Lon N-terminal spans 26–222 (LPMVVLGEMV…KVYLVLARQL (197 aa)). Residue 375 to 382 (GPPGVGKT) coordinates ATP. The Lon proteolytic domain maps to 617–798 (QDEVGVATGV…DEVLRIALSR (182 aa)). Residues Ser704 and Lys747 contribute to the active site. A disordered region spans residues 800-824 (PTPANNQNGSHTNNRGQPSPAPAGT). Polar residues predominate over residues 802 to 816 (PANNQNGSHTNNRGQ).

It belongs to the peptidase S16 family. In terms of assembly, homohexamer. Organized in a ring with a central cavity.

It is found in the cytoplasm. The enzyme catalyses Hydrolysis of proteins in presence of ATP.. In terms of biological role, ATP-dependent serine protease that mediates the selective degradation of mutant and abnormal proteins as well as certain short-lived regulatory proteins. Required for cellular homeostasis and for survival from DNA damage and developmental changes induced by stress. Degrades polypeptides processively to yield small peptide fragments that are 5 to 10 amino acids long. Binds to DNA in a double-stranded, site-specific manner. The polypeptide is Lon protease (Chloroflexus aggregans (strain MD-66 / DSM 9485)).